A 180-amino-acid polypeptide reads, in one-letter code: Putative manganese efflux pump MntP (180 aa).

5 helical membrane-spanning segments follow: residues valine 6 to leucine 26, methionine 33 to tryptophan 53, valine 63 to valine 83, glycine 101 to phenylalanine 121, and leucine 130 to valine 150.

Belongs to the MntP (TC 9.B.29) family.

It is found in the cell membrane. Probably functions as a manganese efflux pump. The polypeptide is Putative manganese efflux pump MntP (Desulforudis audaxviator (strain MP104C)).